The sequence spans 91 residues: CRISPR-associated endoribonuclease Cas2 2 (91 aa).

Mg(2+) is bound at residue aspartate 10.

It belongs to the CRISPR-associated endoribonuclease Cas2 protein family. As to quaternary structure, homodimer, forms a heterotetramer with a Cas1 homodimer. Mg(2+) serves as cofactor.

Its function is as follows. CRISPR (clustered regularly interspaced short palindromic repeat), is an adaptive immune system that provides protection against mobile genetic elements (viruses, transposable elements and conjugative plasmids). CRISPR clusters contain sequences complementary to antecedent mobile elements and target invading nucleic acids. CRISPR clusters are transcribed and processed into CRISPR RNA (crRNA). Functions as a ssRNA-specific endoribonuclease. Involved in the integration of spacer DNA into the CRISPR cassette. This Thermodesulfovibrio yellowstonii (strain ATCC 51303 / DSM 11347 / YP87) protein is CRISPR-associated endoribonuclease Cas2 2.